The chain runs to 1110 residues: Nonribisomal peptide synthetase benY (1110 aa).

The adenylation stretch occupies residues 47 to 443 (RALEFPEKIA…GRKDHQLKVR (397 aa)). The Carrier domain maps to 575–651 (TLETESEKIL…EMAQSARVVP (77 aa)). O-(pantetheine 4'-phosphoryl)serine is present on S612. The tract at residues 713-1025 (YILDGDVDFD…IFHHQNIDTK (313 aa)) is condensation.

It belongs to the NRP synthetase family.

Its pathway is secondary metabolite biosynthesis. In terms of biological role, nonribisomal peptide synthetase; part of the gene cluster that mediates the biosynthesis of benzomalvin A and D. The pathway begins with the loading of amino acid precursors onto the A domains of the non ribosomal peptide synthetases benY and benZ. BenY and the A1 domain of benZ are loaded with anthranilate (Anth), while the A2 domain of benZ is loaded with phenylalanine (Phe). N-methylation of Phe by the methyltransferase benX may happen before loading of Phe onto benZ, after loading of Phe, or after dipeptide formation. Condensation of Anth with the secondary amine of NmPhe or Phe is catalyzed by the C1 domain of benZ, forming a dipeptide intermediate. This is followed by in trans condensation of the Anth-NmPhe dipeptide with Anth bound to the T domain of benY by the C2 domain of benZ to form the linear tripeptide Anth-NmPhe-Anth. Cyclization and release of the tripeptide is then catalyzed by the C-terminal C domain of benY and the resulting 11-member macrocyclic intermediate is expected to spontaneously collapse to form the benzodiazepine core. Benzomalvin A is in conformational equilibrium with its atropisomer, benzomalvin D. The sequence is that of Nonribisomal peptide synthetase benY from Aspergillus terreus.